A 133-amino-acid polypeptide reads, in one-letter code: Interferon-induced transmembrane protein 3 (133 aa).

Residues 1–57 (MNHTVQTFFSPVNSGQPPNYEMLKEEHEVAVLGAPHNPAPPTSTVIHIRSETSVPDH) are Cytoplasmic-facing. Phosphotyrosine is present on Y20. A Glycyl lysine isopeptide (Lys-Gly) (interchain with G-Cter in ubiquitin) cross-link involves residue K24. The helical intramembrane region spans 58–78 (VVWSLFNTLFMNPCCLGFIAF). The segment at 60 to 93 (WSLFNTLFMNPCCLGFIAFAYSVKSRDRKMVGDV) is interaction with SPP1. S-palmitoyl cysteine attachment occurs at residues C71 and C72. Residues 79–107 (AYSVKSRDRKMVGDVTGAQAYASTAKCLN) lie on the Cytoplasmic side of the membrane. Glycyl lysine isopeptide (Lys-Gly) (interchain with G-Cter in ubiquitin) cross-links involve residues K83, K88, and K104. Residue C105 is the site of S-palmitoyl cysteine attachment. A helical transmembrane segment spans residues 108–128 (IWALILGILMTILLIVIPVLI). The segment at 108-133 (IWALILGILMTILLIVIPVLIFQAYG) is interaction with VAPA. At 129–133 (FQAYG) the chain is on the extracellular side.

This sequence belongs to the CD225/Dispanin family. As to quaternary structure, interacts with ATP6V0B. Interacts with CD81. Interacts with SPP1; the interaction reduces OPN expression. Interacts with VAPA. Interacts with BRI3 (isoforms 1 and 2); the interaction with isoform 2 is weaker than with isoform 1. In terms of processing, palmitoylation on membrane-proximal cysteines controls clustering in membrane compartments and antiviral activity against influenza virus and hepatitis C virus (HCV). Has no effect on anti-SARS-CoV-2 activity. Post-translationally, not glycosylated. Polyubiquitinated with both 'Lys-48' and 'Lys-63' linkages. Ubiquitination negatively regulates antiviral activity. Lys-24 is the most prevalent ubiquitination site. In terms of processing, phosphorylation at Tyr-20 is required for endosomal and lysosomal location.

It localises to the cell membrane. Its subcellular location is the late endosome membrane. The protein localises to the early endosome membrane. It is found in the lysosome membrane. The protein resides in the cytoplasm. It localises to the perinuclear region. IFN-induced antiviral protein which disrupts intracellular cholesterol homeostasis. Inhibits the entry of viruses to the host cell cytoplasm by preventing viral fusion with cholesterol depleted endosomes. May inactivate new enveloped viruses which buds out of the infected cell, by letting them go out with a cholesterol depleted membrane. Active against multiple viruses, including influenza A virus, SARS coronaviruses (SARS-CoV and SARS-CoV-2), Marburg virus (MARV), Ebola virus (EBOV), Dengue virus (DNV), West Nile virus (WNV), human immunodeficiency virus type 1 (HIV-1), hepatitis C virus (HCV) and vesicular stomatitis virus (VSV). Can inhibit: influenza virus hemagglutinin protein-mediated viral entry, MARV and EBOV GP1,2-mediated viral entry, SARS-CoV and SARS-CoV-2 S protein-mediated viral entry and VSV G protein-mediated viral entry. Plays a critical role in the structural stability and function of vacuolar ATPase (v-ATPase). Establishes physical contact with the v-ATPase of endosomes which is critical for proper clathrin localization and is also required for the function of the v-ATPase to lower the pH in phagocytic endosomes thus establishing an antiviral state. In hepatocytes, IFITM proteins act in a coordinated manner to restrict HCV infection by targeting the endocytosed HCV virion for lysosomal degradation. IFITM2 and IFITM3 display anti-HCV activity that may complement the anti-HCV activity of IFITM1 by inhibiting the late stages of HCV entry, possibly in a coordinated manner by trapping the virion in the endosomal pathway and targeting it for degradation at the lysosome. Exerts opposing activities on SARS-CoV-2, including amphipathicity-dependent restriction of virus at endosomes and amphipathicity-independent enhancement of infection at the plasma membrane. The sequence is that of Interferon-induced transmembrane protein 3 from Homo sapiens (Human).